The sequence spans 464 residues: Argininosuccinate lyase (464 aa).

Belongs to the lyase 1 family. Argininosuccinate lyase subfamily.

The protein localises to the cytoplasm. It carries out the reaction 2-(N(omega)-L-arginino)succinate = fumarate + L-arginine. It functions in the pathway amino-acid biosynthesis; L-arginine biosynthesis; L-arginine from L-ornithine and carbamoyl phosphate: step 3/3. This chain is Argininosuccinate lyase, found in Pseudomonas paraeruginosa (strain DSM 24068 / PA7) (Pseudomonas aeruginosa (strain PA7)).